The chain runs to 985 residues: Eukaryotic translation initiation factor 4E transporter (985 aa).

Positions 1-24 (MDRRSMGETESGDAFLDLKKPPAS) are disordered. At S5 the chain carries Phosphoserine. The YXXXXLphi motif motif lies at 30–36 (YTKEELL). A phosphoserine mark is found at S74, S78, S115, S120, S136, and S138. The tract at residues 131 to 161 (VSSRRSGSPLEKDSDGLRLLGGRRIGSGRII) is interaction with CSDE1. Positions 195 to 211 (RREFGDSKRVFGERRRN) match the Nuclear localization signal motif. A disordered region spans residues 208-230 (RRRNDSYTEEEPEWFSAGPTSQS). The tract at residues 219 to 240 (PEWFSAGPTSQSETIELTGFDD) is interaction with DDX6. 4 positions are modified to phosphoserine: S301, S345, S353, and S374. K410 is covalently cross-linked (Glycyl lysine isopeptide (Lys-Gly) (interchain with G-Cter in SUMO2)). The residue at position 417 (S417) is a Phosphoserine. Positions 438 to 447 (VEAGLKGLKV) match the Nuclear export signal motif. Residues 448 to 490 (DQQVKNSTPFMAEHLEETLSAVTNNRQLKKDGDMTAFNKLVST) form an interaction with LSM14A region. Residue K486 is modified to N6-acetyllysine. Phosphoserine occurs at positions 513, 564, and 587. Residues 613 to 638 (ITAQMSQLELQQAALEGLALPHDLAV) carry the Nuclear export signal motif. Disordered regions lie at residues 664–693 (QQRVTKSPAPVHRGNSSSPAPAASITSMLS) and 707–803 (ESKE…PTTP). Phosphoserine is present on S693. The tract at residues 695–713 (SFTPTSVIRKMYESKEKSK) is interaction with PATL1. Composition is skewed to basic and acidic residues over residues 707–717 (ESKEKSKEEPA) and 725–735 (DSKEDTQKASE). Residues 736–746 (ENLLSSSSVPS) show a composition bias toward low complexity. Residue S752 is modified to Phosphoserine. The span at 754–776 (TTNSKLSALQRSSCSTPLSQANR) shows a compositional bias: polar residues. 2 positions are modified to phosphoserine: S920 and S951. Residues 922-953 (QTTPQNVPSRSGLPHMHSQLEHRPSQRSSSPV) form a disordered region. Residues 940–985 (QLEHRPSQRSSSPVGLAKWFGSDVLQQPLPSMPAKVISVDELEYRQ) are interaction with LSM14A.

The protein belongs to the 4E-T/EIF4E-T family. In terms of assembly, interacts (via YXXXXLphi motif) with EIF4E. Interacts (via YXXXXLphi motif) with EIF4E2. Interacts with DDX6. Interacts with CSDE1/UNR. Interacts with CNOT1; promoting association with the CCR4-NOT complex. Interacts with LSM14A; promoting EIF4ENIF1 localization to P-bodies. Interacts with PATL1. Interacts with importin beta only in the presence of importin alpha, suggesting a direct interaction with importin alpha. Interacts with APOBEC3G in an RNA-dependent manner. In terms of processing, phosphorylation by MAPK8/JNK1 and or MAPK9/JNK2 in response to oxidative stress promotes P-body assembly. Phosphorylated during meiotic maturation. Widely expressed.

Its subcellular location is the cytoplasm. The protein resides in the P-body. The protein localises to the nucleus. It is found in the PML body. It localises to the nucleus speckle. Functionally, EIF4E-binding protein that regulates translation and stability of mRNAs in processing bodies (P-bodies). Plays a key role in P-bodies to coordinate the storage of translationally inactive mRNAs in the cytoplasm and prevent their degradation. Acts as a binding platform for multiple RNA-binding proteins: promotes deadenylation of mRNAs via its interaction with the CCR4-NOT complex, and blocks decapping via interaction with eIF4E (EIF4E and EIF4E2), thereby protecting deadenylated and repressed mRNAs from degradation. Component of a multiprotein complex that sequesters and represses translation of proneurogenic factors during neurogenesis. Promotes miRNA-mediated translational repression. Required for the formation of P-bodies. Involved in mRNA translational repression mediated by the miRNA effector TNRC6B by protecting TNRC6B-targeted mRNAs from decapping and subsequent decay. Also acts as a nucleoplasmic shuttling protein, which mediates the nuclear import of EIF4E and DDX6 by a piggy-back mechanism. This is Eukaryotic translation initiation factor 4E transporter from Homo sapiens (Human).